Reading from the N-terminus, the 206-residue chain is Large ribosomal subunit protein uL13y (206 aa).

Belongs to the universal ribosomal protein uL13 family.

This Arabidopsis thaliana (Mouse-ear cress) protein is Large ribosomal subunit protein uL13y (RPL13AB).